The chain runs to 92 residues: FMRFamide-like neuropeptides 5 (92 aa).

Positions 1–41 (MSSRSTTIAFLFIATLLVFQCVSAQSSAEDADYLEKYQRIA) are excised as a propeptide. Phenylalanine amide is present on residues Phe-51 and Phe-61. A propeptide spanning residues 64–82 (SRNTWEDGYASPSVNELYV) is cleaved from the precursor. Phe-91 is subject to Phenylalanine amide.

This sequence belongs to the FARP (FMRFamide related peptide) family. As to expression, each flp gene is expressed in a distinct set of neurons. Flp-5 is expressed in the ASE sensory neurons, the 14 and M4 cholinergic pharyngeal motoneurons, and the PVT and RMG neurons. It is weakly expressed in the PB and 12 neurons. Also expressed in pharyngeal muscle.

The protein resides in the secreted. In terms of biological role, FMRFamides and FMRFamide-like peptides are neuropeptides. GAKFIRF-amide has an excitatory effect on dissected pharyngeal myogenic muscle system. This Caenorhabditis elegans protein is FMRFamide-like neuropeptides 5.